Reading from the N-terminus, the 239-residue chain is uncharacterized protein (239 aa).

8 consecutive transmembrane segments (helical) span residues 4 to 24, 29 to 49, 61 to 81, 84 to 104, 116 to 136, 139 to 159, 180 to 200, and 218 to 238; these read LIPK…LGMV, VIWH…VYPV, YQKW…ISVF, PPLI…MYFA, VAGV…GMGT, GWAW…SFYV, LLLP…AFIP, and IGIL…LFIT.

It to H.influenzae HI_1626.

The protein localises to the cell membrane. This is an uncharacterized protein from Bacillus subtilis (strain 168).